We begin with the raw amino-acid sequence, 269 residues long: Shikimate dehydrogenase (NADP(+)) (269 aa).

Residues 17–19 and Thr64 each bind shikimate; that span reads SKS. Lys68 acts as the Proton acceptor in catalysis. Asp80 contacts NADP(+). Shikimate-binding residues include Asn89 and Asp105. NADP(+) is bound by residues 130–134, 154–159, and Met213; these read GAGGA and NRTRAK. A shikimate-binding site is contributed by Tyr215. Gly237 lines the NADP(+) pocket.

Belongs to the shikimate dehydrogenase family. As to quaternary structure, homodimer.

The catalysed reaction is shikimate + NADP(+) = 3-dehydroshikimate + NADPH + H(+). It functions in the pathway metabolic intermediate biosynthesis; chorismate biosynthesis; chorismate from D-erythrose 4-phosphate and phosphoenolpyruvate: step 4/7. Its function is as follows. Involved in the biosynthesis of the chorismate, which leads to the biosynthesis of aromatic amino acids. Catalyzes the reversible NADPH linked reduction of 3-dehydroshikimate (DHSA) to yield shikimate (SA). The chain is Shikimate dehydrogenase (NADP(+)) from Neisseria gonorrhoeae (strain ATCC 700825 / FA 1090).